Here is a 611-residue protein sequence, read N- to C-terminus: Chloroplast sensor kinase, chloroplastic (611 aa).

The transit peptide at 1 to 79 (MLLSAIASQT…PGGGETMVAS (79 aa)) directs the protein to the chloroplast. Residues 17 to 50 (NLHFSNSIPNPRPSNPSLKLLNASSSSSSSSSSS) form a disordered region. Residues 40–50 (SSSSSSSSSSS) are compositionally biased toward low complexity. Residues 116-300 (DFQRLCLEQL…VMDQKTMLLQ (185 aa)) are GAF. Cys121 serves as a coordination point for [3Fe-4S] cluster. The residue at position 188 (Ser188) is a Phosphoserine. Positions 312–602 (KLVEQIRGPL…RVELWLPAFP (291 aa)) constitute a Histidine kinase domain. Residues 345-380 (VEDLIVQGDQIKDTLEELQDAVHLTKANIVRHNEEA) are a coiled coil. The segment covering 385–402 (NKTHNETRRSKYEHKDPI) has biased composition (basic and acidic residues). Residues 385–420 (NKTHNETRRSKYEHKDPIDGSQISSTRLSLGSGLDD) are disordered.

The protein belongs to the chloroplast sensor kinase protein family. Self-interacts. Interacts with the plastoquinone analog 2,5-dibromo-3-methyl-5-isopropyl-p-benzoquinone (DBMIB) and with SIGA/SIG1. [3Fe-4S] cluster is required as a cofactor. Autophosphorylated, possibly on tyrosine residues, in photosystem I (PS I) light and in the presence of manganese ions Mn(2+), to a lesser degree, in the presence of calcium ions Ca(2+), but not in the presence of magnesium ions Mg(2+). Dithiothreitol (DTT) stimulates autophosphorylation. Phosphorylated on Ser-188 in vivo after exposure to far-red light (when plastoquinone (PQ) is oxidized). Not phosphorylated under orange light (reduces PQ).

The protein resides in the plastid. It is found in the chloroplast stroma. The catalysed reaction is L-tyrosyl-[protein] + ATP = O-phospho-L-tyrosyl-[protein] + ADP + H(+). Sensor kinase that senses the plastoquinone (PQ) redox state involved in stoichiometry adjustment of both photosystems (e.g. long-term adaptation via transcriptional regulation of reaction center genes of photosystems I and II) and state transitions (e.g. short-term adaptation involving reversible post-translational phosphorylation of light-harvesting complex II, LHC II), thus linking photosynthesis with gene expression in chloroplasts. Autophosphorylates, probably on a tyrosine residue. Probably phosphorylates SIGA/SIG1 in response to plastoquinone redox state modification. Reduced PQ suppresses its autophosphorylation activity. Represses expression of a number of chloroplast-encoded genes. The protein is Chloroplast sensor kinase, chloroplastic of Arabidopsis thaliana (Mouse-ear cress).